The chain runs to 205 residues: Probable thymidylate kinase (205 aa).

Residue 9–16 (GIDGVGKS) participates in ATP binding.

Belongs to the thymidylate kinase family.

It carries out the reaction dTMP + ATP = dTDP + ADP. This chain is Probable thymidylate kinase, found in Caldivirga maquilingensis (strain ATCC 700844 / DSM 13496 / JCM 10307 / IC-167).